The chain runs to 252 residues: Phosphate import ATP-binding protein PstB (252 aa).

The region spanning 6-247 is the ABC transporter domain; it reads IDTRDVNFWY…PEKEATQNYI (242 aa). 38–45 contacts ATP; the sequence is GPSGCGKS.

This sequence belongs to the ABC transporter superfamily. Phosphate importer (TC 3.A.1.7) family. The complex is composed of two ATP-binding proteins (PstB), two transmembrane proteins (PstC and PstA) and a solute-binding protein (PstS).

It localises to the cell inner membrane. The catalysed reaction is phosphate(out) + ATP + H2O = ADP + 2 phosphate(in) + H(+). Part of the ABC transporter complex PstSACB involved in phosphate import. Responsible for energy coupling to the transport system. This is Phosphate import ATP-binding protein PstB from Bacteroides thetaiotaomicron (strain ATCC 29148 / DSM 2079 / JCM 5827 / CCUG 10774 / NCTC 10582 / VPI-5482 / E50).